The chain runs to 98 residues: MNAERLMQVILAPVVTEKATFVAEKNQQIAFRVVADATKPEIKAAVELLFKVQVESVQVLNRKGKVKRFGRFVGRRRSERKAYVALKEGQEIDFAEVK.

This sequence belongs to the universal ribosomal protein uL23 family. Part of the 50S ribosomal subunit. Contacts protein L29, and trigger factor when it is bound to the ribosome.

Its function is as follows. One of the early assembly proteins it binds 23S rRNA. One of the proteins that surrounds the polypeptide exit tunnel on the outside of the ribosome. Forms the main docking site for trigger factor binding to the ribosome. The chain is Large ribosomal subunit protein uL23 from Bordetella petrii (strain ATCC BAA-461 / DSM 12804 / CCUG 43448).